Consider the following 115-residue polypeptide: Large ribosomal subunit protein bL19 (115 aa).

Belongs to the bacterial ribosomal protein bL19 family.

In terms of biological role, this protein is located at the 30S-50S ribosomal subunit interface and may play a role in the structure and function of the aminoacyl-tRNA binding site. This chain is Large ribosomal subunit protein bL19, found in Kosmotoga olearia (strain ATCC BAA-1733 / DSM 21960 / TBF 19.5.1).